We begin with the raw amino-acid sequence, 280 residues long: uncharacterized protein (280 aa).

Tyrosine 54 functions as the Proton donor in the catalytic mechanism. A substrate-binding site is contributed by histidine 116. An NADP(+)-binding site is contributed by 194–246; that stretch reads SPLMQGQLLDHPVLADIAQTYNKSVAQIILRWDLQHGIITIPKSTKEHRIKEN.

The protein belongs to the aldo/keto reductase family.

This is an uncharacterized protein from Bacillus subtilis (strain 168).